We begin with the raw amino-acid sequence, 407 residues long: S-adenosylmethionine synthase (407 aa).

His19 serves as a coordination point for ATP. Asp21 contacts Mg(2+). Glu47 serves as a coordination point for K(+). Positions 60 and 103 each coordinate L-methionine. The segment at 103–113 (QSQEIADGVDN) is flexible loop. The interval 107–134 (IADGVDNSDEARTNGDVEEDDRAGAGDQ) is disordered. ATP-binding positions include 178 to 180 (DGK), Asp258, 264 to 265 (RK), Ala281, and Lys285. Position 258 (Asp258) interacts with L-methionine. Residue Lys289 coordinates L-methionine.

It belongs to the AdoMet synthase family. In terms of assembly, homotetramer; dimer of dimers. It depends on Mg(2+) as a cofactor. Requires K(+) as cofactor.

Its subcellular location is the cytoplasm. The catalysed reaction is L-methionine + ATP + H2O = S-adenosyl-L-methionine + phosphate + diphosphate. The protein operates within amino-acid biosynthesis; S-adenosyl-L-methionine biosynthesis; S-adenosyl-L-methionine from L-methionine: step 1/1. Catalyzes the formation of S-adenosylmethionine (AdoMet) from methionine and ATP. The overall synthetic reaction is composed of two sequential steps, AdoMet formation and the subsequent tripolyphosphate hydrolysis which occurs prior to release of AdoMet from the enzyme. This is S-adenosylmethionine synthase from Corynebacterium glutamicum (strain ATCC 13032 / DSM 20300 / JCM 1318 / BCRC 11384 / CCUG 27702 / LMG 3730 / NBRC 12168 / NCIMB 10025 / NRRL B-2784 / 534).